A 540-amino-acid chain; its full sequence is Phosphoenolpyruvate carboxykinase (ATP) (540 aa).

Residues arginine 67, tyrosine 207, and lysine 213 each coordinate substrate. ATP is bound by residues lysine 213, histidine 232, and 248-256; that span reads GLSGTGKTT. Residues lysine 213 and histidine 232 each contribute to the Mn(2+) site. Mn(2+) is bound at residue aspartate 269. ATP-binding positions include glutamate 297, arginine 333, 449–450, and threonine 455; that span reads RI. Residue arginine 333 participates in substrate binding.

Belongs to the phosphoenolpyruvate carboxykinase (ATP) family. Monomer. Requires Mn(2+) as cofactor.

It localises to the cytoplasm. It carries out the reaction oxaloacetate + ATP = phosphoenolpyruvate + ADP + CO2. It functions in the pathway carbohydrate biosynthesis; gluconeogenesis. Functionally, involved in the gluconeogenesis. Catalyzes the conversion of oxaloacetate (OAA) to phosphoenolpyruvate (PEP) through direct phosphoryl transfer between the nucleoside triphosphate and OAA. This Aliivibrio fischeri (strain MJ11) (Vibrio fischeri) protein is Phosphoenolpyruvate carboxykinase (ATP).